A 377-amino-acid chain; its full sequence is Glutamate 5-kinase (377 aa).

Lysine 22 is an ATP binding site. Substrate contacts are provided by serine 62, aspartate 149, and asparagine 161. Residues 181-182 (TD) and 223-229 (TGGMVTK) each bind ATP. Residues 285-359 (QGTLVADSGA…GRNTAQLKRF (75 aa)) enclose the PUA domain.

The protein belongs to the glutamate 5-kinase family.

It localises to the cytoplasm. The enzyme catalyses L-glutamate + ATP = L-glutamyl 5-phosphate + ADP. Its pathway is amino-acid biosynthesis; L-proline biosynthesis; L-glutamate 5-semialdehyde from L-glutamate: step 1/2. Functionally, catalyzes the transfer of a phosphate group to glutamate to form L-glutamate 5-phosphate. This chain is Glutamate 5-kinase, found in Bifidobacterium adolescentis (strain ATCC 15703 / DSM 20083 / NCTC 11814 / E194a).